Consider the following 399-residue polypeptide: Protein IQ-DOMAIN 25 (399 aa).

Residues 1 to 8 (MRKNLTKL) carry the Nuclear localization signal motif. Calmodulin-binding regions lie at residues 81 to 91 (KERRTHAIAVA) and 99 to 110 (DAAVAAAKAAAA). IQ domains lie at 130–158 (EHRA…GVVK) and 159–181 (IQAL…SMEA). Disordered stretches follow at residues 198–219 (NGNA…ENRN), 262–302 (SPLS…SPAR), and 346–377 (LRSH…VRMQ). Positions 285 to 294 (KFPTAQSTPR) are enriched in polar residues.

The protein belongs to the IQD family. As to quaternary structure, binds to multiple calmodulin (CaM) in the presence of Ca(2+) and CaM-like proteins.

It localises to the nucleus. It is found in the cell membrane. Its function is as follows. May be involved in cooperative interactions with calmodulins or calmodulin-like proteins. Recruits calmodulin proteins to microtubules, thus being a potential scaffold in cellular signaling and trafficking. May associate with nucleic acids and regulate gene expression at the transcriptional or post-transcriptional level. The sequence is that of Protein IQ-DOMAIN 25 from Arabidopsis thaliana (Mouse-ear cress).